Consider the following 551-residue polypeptide: Tetrachloroethene reductive dehalogenase (551 aa).

Residues 1–39 (MGEINRRNFLKASMLGAAAAAVASASAVKGMVSPLVADA) constitute a signal peptide (tat-type signal). Residues 411 to 440 (PRKFGVREFCRLCKKCADACPAQAISHEKD) form the 4Fe-4S ferredoxin-type 1 domain. Cysteine 420, cysteine 423, cysteine 426, cysteine 430, cysteine 467, cysteine 478, cysteine 481, and cysteine 485 together coordinate [4Fe-4S] cluster. The 4Fe-4S ferredoxin-type 2 domain occupies 478-496 (CANCVAVCSWNKVETWNHD).

The protein belongs to the PceA family. Monomer. [4Fe-4S] cluster is required as a cofactor. Corrinoid serves as cofactor. Post-translationally, predicted to be exported by the Tat system. The position of the signal peptide cleavage has been experimentally proven.

It is found in the cell membrane. The enzyme catalyses trichloroethene + chloride + A + H(+) = tetrachloroethene + AH2. It catalyses the reaction trichloroethene + AH2 = (Z)-1,2-dichloroethene + chloride + A + H(+). With respect to regulation, activity is inhibited by ammonium ions. Photoreversibly inactivated by 1-iodopropane. Its function is as follows. Catalyzes the reductive dechlorination of tetrachloroethene (PCE) to trichloroethene (TCE) and of trichloroethene to cis-1,2-dichloroethene (DCE). Can also use trichlorofluoroethene, tetrachloromethane, hexachloroethane, tetrachloroethane, trichloroethane and 1,1,1-trichloro-2,2,2-trifluoroethane. Menaquinone can act as the electron donor. Reduced methyl viologen can act as the artificial electron donor. The protein is Tetrachloroethene reductive dehalogenase of Dehalobacter restrictus (strain DSM 9455 / PER-K23).